An 834-amino-acid chain; its full sequence is Glycerol-3-phosphate acyltransferase (834 aa).

An HXXXXD motif motif is present at residues 309–314 (CHRSHI).

The protein belongs to the GPAT/DAPAT family.

The protein localises to the cell inner membrane. It catalyses the reaction sn-glycerol 3-phosphate + an acyl-CoA = a 1-acyl-sn-glycero-3-phosphate + CoA. Its pathway is phospholipid metabolism; CDP-diacylglycerol biosynthesis; CDP-diacylglycerol from sn-glycerol 3-phosphate: step 1/3. The chain is Glycerol-3-phosphate acyltransferase from Pseudomonas fluorescens (strain ATCC BAA-477 / NRRL B-23932 / Pf-5).